Here is a 338-residue protein sequence, read N- to C-terminus: D-erythrose-4-phosphate dehydrogenase (338 aa).

An NAD(+)-binding site is contributed by 11-12 (RI). Residues 153–155 (SCT), Arg199, 212–213 (TK), and Arg235 contribute to the substrate site. Residue Cys154 is the Nucleophile of the active site. Asn317 is a binding site for NAD(+).

This sequence belongs to the glyceraldehyde-3-phosphate dehydrogenase family. Epd subfamily. As to quaternary structure, homotetramer.

It localises to the cytoplasm. It carries out the reaction D-erythrose 4-phosphate + NAD(+) + H2O = 4-phospho-D-erythronate + NADH + 2 H(+). It functions in the pathway cofactor biosynthesis; pyridoxine 5'-phosphate biosynthesis; pyridoxine 5'-phosphate from D-erythrose 4-phosphate: step 1/5. Catalyzes the NAD-dependent conversion of D-erythrose 4-phosphate to 4-phosphoerythronate. The sequence is that of D-erythrose-4-phosphate dehydrogenase from Shewanella amazonensis (strain ATCC BAA-1098 / SB2B).